We begin with the raw amino-acid sequence, 265 residues long: Glutamate racemase (265 aa).

Substrate is bound by residues 12–13 and 44–45; these read DS and YG. Cysteine 75 (proton donor/acceptor) is an active-site residue. 76–77 lines the substrate pocket; sequence NT. The active-site Proton donor/acceptor is the cysteine 183. Residue 184-185 coordinates substrate; that stretch reads TH.

It belongs to the aspartate/glutamate racemases family.

It carries out the reaction L-glutamate = D-glutamate. It functions in the pathway cell wall biogenesis; peptidoglycan biosynthesis. Provides the (R)-glutamate required for cell wall biosynthesis. The sequence is that of Glutamate racemase from Carboxydothermus hydrogenoformans (strain ATCC BAA-161 / DSM 6008 / Z-2901).